The primary structure comprises 129 residues: M-zodatoxin-Lt8i (129 aa).

The first 20 residues, 1 to 20, serve as a signal peptide directing secretion; that stretch reads MKYFVVALALVAAFACIAES. A propeptide spanning residues 21–60 is cleaved from the precursor; it reads KPAESEHELAEVEEENELADLEDAVWLEHLADLSDLEEAR.

It belongs to the cationic peptide 06 (cytoinsectotoxin) family. Expressed by the venom gland.

Its subcellular location is the secreted. Insecticidal, cytolytic and antimicrobial peptide. Forms voltage-dependent, ion-permeable channels in membranes. At high concentration causes cell membrane lysis. The polypeptide is M-zodatoxin-Lt8i (cit 1-6) (Lachesana tarabaevi (Spider)).